A 273-amino-acid polypeptide reads, in one-letter code: Protein FAM216A (273 aa).

Residues 1–47 form a disordered region; sequence MLGQLLPHTARGLGAAEMPGQGPGSDWTERSSSAEPPAVAGTEGGGG.

It belongs to the FAM216 family.

The sequence is that of Protein FAM216A (FAM216A) from Homo sapiens (Human).